A 37-amino-acid polypeptide reads, in one-letter code: Translationally-controlled tumor protein homolog (37 aa).

In terms of domain architecture, TCTP spans Met1–Glu37.

This sequence belongs to the TCTP family. Monomer.

The protein resides in the cytoplasm. Binds calcium; exact function not known. In Trypanosoma brucei brucei, this protein is Translationally-controlled tumor protein homolog.